Reading from the N-terminus, the 411-residue chain is Alpha-1-antitrypsin 1-6 (411 aa).

A signal peptide spans 1–25; it reads MTTPFSSHGLLLLVGLCCLLLITKT. Residues Asn50, Asn89, Asn101, and Asn164 are each glycosylated (N-linked (GlcNAc...) asparagine).

The protein belongs to the serpin family. As to expression, expressed predominantly in epididymis where it is found in the epithelial cells of the caput, corpus and cauda epididymis.

The protein localises to the secreted. Its function is as follows. Inhibitor of serine proteases. In Mus musculus (Mouse), this protein is Alpha-1-antitrypsin 1-6.